We begin with the raw amino-acid sequence, 556 residues long: Formate--tetrahydrofolate ligase (556 aa).

65–72 (TPAGEGKT) is an ATP binding site.

This sequence belongs to the formate--tetrahydrofolate ligase family.

It catalyses the reaction (6S)-5,6,7,8-tetrahydrofolate + formate + ATP = (6R)-10-formyltetrahydrofolate + ADP + phosphate. The protein operates within one-carbon metabolism; tetrahydrofolate interconversion. The polypeptide is Formate--tetrahydrofolate ligase (Acetivibrio thermocellus (strain ATCC 27405 / DSM 1237 / JCM 9322 / NBRC 103400 / NCIMB 10682 / NRRL B-4536 / VPI 7372) (Clostridium thermocellum)).